Consider the following 305-residue polypeptide: Ribosomal RNA small subunit methyltransferase H (305 aa).

S-adenosyl-L-methionine is bound by residues 46–48 (GGH), aspartate 65, phenylalanine 92, aspartate 108, and histidine 115.

The protein belongs to the methyltransferase superfamily. RsmH family.

The protein localises to the cytoplasm. The enzyme catalyses cytidine(1402) in 16S rRNA + S-adenosyl-L-methionine = N(4)-methylcytidine(1402) in 16S rRNA + S-adenosyl-L-homocysteine + H(+). Functionally, specifically methylates the N4 position of cytidine in position 1402 (C1402) of 16S rRNA. The chain is Ribosomal RNA small subunit methyltransferase H from Trichormus variabilis (strain ATCC 29413 / PCC 7937) (Anabaena variabilis).